The following is a 394-amino-acid chain: Acetate kinase (394 aa).

Residue Asn-10 participates in Mg(2+) binding. Position 17 (Lys-17) interacts with ATP. Position 87 (Arg-87) interacts with substrate. The active-site Proton donor/acceptor is Asp-144. ATP is bound by residues 204–208 (HLGNG), 279–281 (DMR), and 327–331 (GIGEN). Glu-381 serves as a coordination point for Mg(2+).

This sequence belongs to the acetokinase family. Homodimer. The cofactor is Mg(2+). Requires Mn(2+) as cofactor.

The protein resides in the cytoplasm. It carries out the reaction acetate + ATP = acetyl phosphate + ADP. The protein operates within metabolic intermediate biosynthesis; acetyl-CoA biosynthesis; acetyl-CoA from acetate: step 1/2. Functionally, catalyzes the formation of acetyl phosphate from acetate and ATP. Can also catalyze the reverse reaction. This is Acetate kinase from Pseudomonas aeruginosa (strain LESB58).